We begin with the raw amino-acid sequence, 346 residues long: Serine/threonine-protein phosphatase PP1(5.9) (346 aa).

The Mn(2+) site is built by Asp102, His104, Asp130, and Asn162. The active-site Proton donor is the His163. His211 and His287 together coordinate Mn(2+).

Belongs to the PPP phosphatase family. PP-1 subfamily. Mn(2+) serves as cofactor.

It catalyses the reaction O-phospho-L-seryl-[protein] + H2O = L-seryl-[protein] + phosphate. The catalysed reaction is O-phospho-L-threonyl-[protein] + H2O = L-threonyl-[protein] + phosphate. The chain is Serine/threonine-protein phosphatase PP1(5.9) from Trypanosoma brucei brucei.